A 227-amino-acid polypeptide reads, in one-letter code: Uridylate kinase (227 aa).

7 to 11 (KISGK) serves as a coordination point for ATP. Position 44 (glycine 44) interacts with UMP. Glycine 45 and arginine 49 together coordinate ATP. UMP contacts are provided by residues aspartate 66 and 114–120 (FQPGQST). ATP is bound by residues threonine 140, asparagine 141, tyrosine 146, and aspartate 149.

It belongs to the UMP kinase family. Homohexamer.

It is found in the cytoplasm. The enzyme catalyses UMP + ATP = UDP + ADP. It functions in the pathway pyrimidine metabolism; CTP biosynthesis via de novo pathway; UDP from UMP (UMPK route): step 1/1. Unlike most bacteria, is not activated by GTP. UTP acts as a competitive inhibitor against both substrates. High concentration of UMP abolishes the inhibition of UTP at low ATP concentrations, indicating that UTP binds to the acceptor site (UMP site). Its function is as follows. Catalyzes the reversible phosphorylation of UMP to UDP, with ATP as the most efficient phosphate donor. Is also able to phosphorylate dUMP, although much less efficiently. In Saccharolobus solfataricus (strain ATCC 35092 / DSM 1617 / JCM 11322 / P2) (Sulfolobus solfataricus), this protein is Uridylate kinase (pyrH).